The sequence spans 399 residues: Endonuclease III homolog 1 (399 aa).

A mitochondrion-targeting transit peptide spans 1–26 (MQKISKYSSMAILRKRPLVKTETGPE). The Bipartite nuclear localization signal motif lies at 14-37 (RKRPLVKTETGPESELLPEKRTKI). Lys-194 is covalently cross-linked (Glycyl lysine isopeptide (Lys-Gly) (interchain with G-Cter in SUMO)). Residues 223–247 (FSSDVPATINELLGLPGVGPKMAYL) form the HhH domain. The active-site Nucleophile; for N-glycosylase activity is the Lys-243.

This sequence belongs to the Nth/MutY family. Monosumoylated. Sumoylation is associated with targeting of NTG1 to nuclei containing oxidative DNA damage.

It is found in the nucleus. The protein localises to the mitochondrion. It catalyses the reaction 2'-deoxyribonucleotide-(2'-deoxyribose 5'-phosphate)-2'-deoxyribonucleotide-DNA = a 3'-end 2'-deoxyribonucleotide-(2,3-dehydro-2,3-deoxyribose 5'-phosphate)-DNA + a 5'-end 5'-phospho-2'-deoxyribonucleoside-DNA + H(+). Functionally, bifunctional DNA N-glycosylase with associated apurinic/apyrimidinic (AP) lyase function that catalyzes the first step in base excision repair (BER), the primary repair pathway for the repair of oxidative DNA damage. The DNA N-glycosylase activity releases the damaged DNA base from DNA by cleaving the N-glycosidic bond, leaving an AP site. The AP-lyase activity cleaves the phosphodiester bond 3' to the AP site by a beta-elimination. Primarily recognizes and repairs oxidative base damage of pyrimidines, but also purine-derived lesions, alkylation damage and cytosine photoproducts generated by UV irradiation as well as abasic sites. Also has 8-oxoguanine DNA glycosylase activity. The AP lyase can incise AP sites opposite all four bases. May also play a role in the regulation of mtDNA copy number by introducing a double-stranded break (DSB) at the mtDNA replication origin ori5, initiating the rolling-circle mtDNA replication. This is Endonuclease III homolog 1 from Saccharomyces cerevisiae (strain ATCC 204508 / S288c) (Baker's yeast).